The following is a 414-amino-acid chain: Serine/threonine transporter SstT (414 aa).

8 consecutive transmembrane segments (helical) span residues 16–36, 46–66, 84–104, 143–163, 180–200, 219–239, 300–320, and 332–352; these read GSLV…AWIS, LGTL…LMLV, ILFL…VFSF, ALLN…GFAL, AVTF…FGLV, LVVL…LLVF, MAGA…TLGV, and VVAS…LLLI.

The protein belongs to the dicarboxylate/amino acid:cation symporter (DAACS) (TC 2.A.23) family.

Its subcellular location is the cell inner membrane. It carries out the reaction L-serine(in) + Na(+)(in) = L-serine(out) + Na(+)(out). The enzyme catalyses L-threonine(in) + Na(+)(in) = L-threonine(out) + Na(+)(out). Its function is as follows. Involved in the import of serine and threonine into the cell, with the concomitant import of sodium (symport system). This is Serine/threonine transporter SstT from Salmonella heidelberg (strain SL476).